Reading from the N-terminus, the 105-residue chain is Large ribosomal subunit protein uL24 (105 aa).

It belongs to the universal ribosomal protein uL24 family. Part of the 50S ribosomal subunit.

In terms of biological role, one of two assembly initiator proteins, it binds directly to the 5'-end of the 23S rRNA, where it nucleates assembly of the 50S subunit. One of the proteins that surrounds the polypeptide exit tunnel on the outside of the subunit. This Mycolicibacterium smegmatis (strain ATCC 700084 / mc(2)155) (Mycobacterium smegmatis) protein is Large ribosomal subunit protein uL24.